Reading from the N-terminus, the 514-residue chain is Na(+)/H(+) antiporter NhaB (514 aa).

11 helical membrane-spanning segments follow: residues 21–41 (LAIVVFLIINPIVFFFISPFI), 43–63 (GWLLVAEFIFTLAMALKCYPL), 88–108 (IMANFEVILLLIFMVAGIFFM), 143–163 (FLDALTVVAVIISVAMGFYGV), 203–223 (LMMHAGVGTALGGVMTVVGEP), 239–259 (FFLRMAPVTIPVFICGLLTCF), 304–324 (ALIAIWLIVGLAFHLAAVGLI), 349–369 (QESLPFTALLVVFFSVVAVII), 390–410 (LALFYLFNGLLSSISDNVFVA), 448–468 (ATPNGQAAFLFLLTSSISPLI), and 484–504 (IVLSIIGLLAIEFILPAATIW).

The protein belongs to the NhaB Na(+)/H(+) (TC 2.A.34) antiporter family.

The protein resides in the cell inner membrane. The catalysed reaction is 2 Na(+)(in) + 3 H(+)(out) = 2 Na(+)(out) + 3 H(+)(in). Its function is as follows. Na(+)/H(+) antiporter that extrudes sodium in exchange for external protons. This is Na(+)/H(+) antiporter NhaB from Haemophilus influenzae (strain ATCC 51907 / DSM 11121 / KW20 / Rd).